We begin with the raw amino-acid sequence, 359 residues long: Prostaglandin D2 receptor (359 aa).

Residues 1-21 (MKSPFYRCQNTTSVEKGNSAV) are Extracellular-facing. The N-linked (GlcNAc...) asparagine glycan is linked to asparagine 10. A helical membrane pass occupies residues 22–42 (MGGVLFSTGLLGNLLALGLLA). Over 43–59 (RSGLGWCSRRPLRPLPS) the chain is Cytoplasmic. The helical transmembrane segment at 60–80 (VFYMLVCGLTVTDLLGKCLLS) threads the bilayer. At 81–107 (PVVLAAYAQNRSLRVLAPALDNSLCQA) the chain is on the extracellular side. An N-linked (GlcNAc...) asparagine glycan is attached at asparagine 90. Cysteine 105 and cysteine 183 are joined by a disulfide. The helical transmembrane segment at 108–128 (FAFFMSFFGLSSTLQLLAMAL) threads the bilayer. Residues 129–150 (ECWLSLGHPFFYRRHITLRLGA) lie on the Cytoplasmic side of the membrane. A helical transmembrane segment spans residues 151-171 (LVAPVVSAFSLAFCALPFMGF). Topologically, residues 172–195 (GKFVQYCPGTWCFIQMVHEEGSLS) are extracellular. The chain crosses the membrane as a helical span at residues 196–216 (VLGYSVLYSSLMALLVLATVL). Topologically, residues 217 to 262 (CNLGAMRNLYAMHRRLQRHPRSCTRDCAEPRADGREASPQPLEELD) are cytoplasmic. A helical membrane pass occupies residues 263 to 283 (HLLLLALMTVLFTMCSLPVIY). The Extracellular segment spans residues 284–310 (RAYYGAFKDVKEKNRTSEEAEDLRALR). Asparagine 297 carries an N-linked (GlcNAc...) asparagine glycan. A helical membrane pass occupies residues 311 to 331 (FLSVISIVDPWIFIIFRSPVF). At 332 to 359 (RIFFHKIFIRPLRYRSRCSNSTNMESSL) the chain is on the cytoplasmic side.

It belongs to the G-protein coupled receptor 1 family. In terms of tissue distribution, expressed in retinal choroid, ciliary epithelium, longitudinal and circular ciliary muscles, iris, small intestine and platelet membranes.

It localises to the cell membrane. Its function is as follows. Receptor for prostaglandin D2 (PGD2). The activity of this receptor is mainly mediated by G(s) proteins that stimulate adenylate cyclase, resulting in an elevation of intracellular cAMP. A mobilization of calcium is also observed, but without formation of inositol 1,4,5-trisphosphate. Involved in PLA2G3-dependent maturation of mast cells. PLA2G3 is secreted by immature mast cells and acts on nearby fibroblasts upstream to PTDGS to synthesize PGD2, which in turn promotes mast cell maturation and degranulation via PTGDR. The chain is Prostaglandin D2 receptor (PTGDR) from Homo sapiens (Human).